Consider the following 75-residue polypeptide: U6-lycotoxin-Ls1c (75 aa).

The signal sequence occupies residues 1-21 (MKLLLFTALVLVVISLIEVEA). The propeptide occupies 22–25 (ENER). Intrachain disulfides connect cysteine 27–cysteine 42, cysteine 34–cysteine 47, cysteine 41–cysteine 65, and cysteine 49–cysteine 63.

Belongs to the neurotoxin 19 (CSTX) family. 06 (U6-Lctx) subfamily. As to expression, expressed by the venom gland.

It localises to the secreted. This chain is U6-lycotoxin-Ls1c, found in Lycosa singoriensis (Wolf spider).